The primary structure comprises 225 residues: Ribosomal RNA small subunit methyltransferase G (225 aa).

S-adenosyl-L-methionine contacts are provided by residues glycine 84, phenylalanine 89, 107–109 (DST), 135–136 (AE), and arginine 154.

The protein belongs to the methyltransferase superfamily. RNA methyltransferase RsmG family.

The protein localises to the cytoplasm. In terms of biological role, specifically methylates the N7 position of a guanine in 16S rRNA. This is Ribosomal RNA small subunit methyltransferase G from Microcystis aeruginosa (strain NIES-843 / IAM M-2473).